A 294-amino-acid polypeptide reads, in one-letter code: ATP synthase gamma chain (294 aa).

Belongs to the ATPase gamma chain family. F-type ATPases have 2 components, CF(1) - the catalytic core - and CF(0) - the membrane proton channel. CF(1) has five subunits: alpha(3), beta(3), gamma(1), delta(1), epsilon(1). CF(0) has three main subunits: a, b and c.

It localises to the cell inner membrane. Its function is as follows. Produces ATP from ADP in the presence of a proton gradient across the membrane. The gamma chain is believed to be important in regulating ATPase activity and the flow of protons through the CF(0) complex. The protein is ATP synthase gamma chain of Campylobacter jejuni subsp. jejuni serotype O:23/36 (strain 81-176).